Consider the following 89-residue polypeptide: Small ribosomal subunit protein uS15 (89 aa).

Belongs to the universal ribosomal protein uS15 family. In terms of assembly, part of the 30S ribosomal subunit. Forms a bridge to the 50S subunit in the 70S ribosome, contacting the 23S rRNA.

In terms of biological role, one of the primary rRNA binding proteins, it binds directly to 16S rRNA where it helps nucleate assembly of the platform of the 30S subunit by binding and bridging several RNA helices of the 16S rRNA. Its function is as follows. Forms an intersubunit bridge (bridge B4) with the 23S rRNA of the 50S subunit in the ribosome. In Syntrophomonas wolfei subsp. wolfei (strain DSM 2245B / Goettingen), this protein is Small ribosomal subunit protein uS15.